We begin with the raw amino-acid sequence, 201 residues long: Recombination protein RecR (201 aa).

The segment at 60–75 adopts a C4-type zinc-finger fold; sequence CSCCGNVDTSDPCTIC. Residues 83–178 enclose the Toprim domain; the sequence is ATLIVVEDVS…RVTRLAHGVP (96 aa).

Belongs to the RecR family.

Its function is as follows. May play a role in DNA repair. It seems to be involved in an RecBC-independent recombinational process of DNA repair. It may act with RecF and RecO. The protein is Recombination protein RecR of Brucella ovis (strain ATCC 25840 / 63/290 / NCTC 10512).